Reading from the N-terminus, the 536-residue chain is Probable cytochrome P450 318a1 (536 aa).

Residues 439-457 show a composition bias toward basic and acidic residues; sequence EEEQLSKGHNDSGSGEKRR. Residues 439-460 are disordered; the sequence is EEEQLSKGHNDSGSGEKRRQRD. A heme-binding site is contributed by Cys-477.

It belongs to the cytochrome P450 family. Heme is required as a cofactor.

It localises to the endoplasmic reticulum membrane. The protein localises to the microsome membrane. May be involved in the metabolism of insect hormones and in the breakdown of synthetic insecticides. This chain is Probable cytochrome P450 318a1 (Cyp318a1), found in Drosophila melanogaster (Fruit fly).